The primary structure comprises 906 residues: MCRIAGAPRTLLPLLAALLQASVEASGEIALCKTGFPEDVYSAVLPKDVHEGQPLLNVKFSNCNRKRKVQYESSEPADFKVDEDGTVYAVRSFPLTAEQAKFLIYAQDKETQEKWQVAVNLSREPTLTEEPMKEPHEIEEIVFPRQLAKHSGALQRQKRDWVIPPINLPENSRGPFPQELVRIRSDRDKNLSLRYSVTGPGADQPPTGIFIINPISGQLSVTKPLDRELIARFHLRAHAVDINGNQVENPIDIVINVIDMNDNRPEFLHQVWNGSVPEGSKPGTYVMTVTAIDADDPNALNGMLRYRILSQAPSTPSPNMFTINNETGDIITVAAGLDREKVQQYTLIIQATDMEGNPTYGLSNTATAVITVTDVNDNPPEFTAMTFYGEVPENRVDVIVANLTVTDKDQPHTPAWNAAYRISGGDPTGRFAILTDPNSNDGLVTVVKPIDFETNRMFVLTVAAENQVPLAKGIQHPPQSTATVSVTVIDVNENPYFAPNPKIIRQEEGLHAGTMLTTLTAQDPDRYMQQNIRYTKLSDPANWLKIDPVNGQITTIAVLDRESPNVKNNIYNATFLASDNGIPPMSGTGTLQIYLLDINDNAPQVLPQEAETCETPEPNSINITALDYDIDPNAGPFAFDLPLSPVTIKRNWTINRLNGDFAQLNLKIKFLEAGIYEVPIIITDSGNPPKSNISILRVKVCQCDSNGDCTDVDRIVGAGLGTGAIIAILLCIIILLILVLMFVVWMKRRDKERQAKQLLIDPEDDVRDNILKYDEEGGGEEDQDYDLSQLQQPDTVEPDAIKPVGIRRLDERPIHAEPQYPVRSAAPHPGDIGDFINEGLKAADNDPTAPPYDSLLVFDYEGSGSTAGSLSSLNSSSSGGDQDYDYLNDWGPRFKKLADMYGGGDD.

The signal sequence occupies residues Met-1 to Ala-25. The propeptide occupies Ser-26–Arg-159. Cadherin domains follow at residues Asp-160 to Phe-267, Leu-268 to Phe-382, Thr-383 to Phe-497, Ala-498 to Pro-603, and Gln-604 to Gly-717. Over Asp-160–Ala-724 the chain is Extracellular. Glu-170 contacts Ca(2+). N-linked (GlcNAc...) asparagine glycosylation is present at Asn-190. Asp-226, Glu-228, Asp-259, Met-260, Asn-261, Asp-262, and Asn-263 together coordinate Ca(2+). N-linked (GlcNAc...) asparagine glycosylation is present at Asn-273. Asp-293, Asp-295, and Asn-301 together coordinate Ca(2+). N-linked (GlcNAc...) asparagine glycosylation occurs at Asn-325. Asp-353 is a Ca(2+) binding site. Asn-402, Asn-572, Asn-651, and Asn-692 each carry an N-linked (GlcNAc...) asparagine glycan. The helical transmembrane segment at Ile-725–Trp-745 threads the bilayer. Over Met-746–Asp-906 the chain is Cytoplasmic. A compositionally biased stretch (low complexity) spans Ser-863 to Gly-880. The segment at Ser-863–Asp-883 is disordered.

Homodimer (via extracellular region). Can also form heterodimers with other cadherins (via extracellular region). Dimerization occurs in trans, i.e. with a cadherin chain from another cell. Interacts with CDCP1. Interacts with PCDH8; this complex may also include TAOK2. The interaction with PCDH8 may lead to internalization through TAOK2/p38 MAPK pathway. Identified in a complex containing FGFR4, NCAM1, CDH2, PLCG1, FRS2, SRC, SHC1, GAP43 and CTTN. May interact with OBSCN (via protein kinase domain 2). Interacts with FBXO45. In terms of processing, cleaved by MMP24. Ectodomain cleavage leads to the generation of a soluble 90 kDa N-terminal soluble fragment and a 45 kDa membrane-bound C-terminal fragment 1 (CTF1), which is further cleaved by gamma-secretase into a 35 kDa. Cleavage in neural stem cells by MMP24 affects CDH2-mediated anchorage of neural stem cells to ependymocytes in the adult subependymal zone, leading to modulate neural stem cell quiescence. Post-translationally, may be phosphorylated by OBSCN. O-glycosylated on Ser and Thr residues. As to expression, expressed in cardiac muscle (at protein level).

It localises to the cell membrane. Its subcellular location is the sarcolemma. The protein resides in the cell junction. It is found in the adherens junction. The protein localises to the desmosome. It localises to the cell surface. Calcium-dependent cell adhesion protein; preferentially mediates homotypic cell-cell adhesion by dimerization with a CDH2 chain from another cell. Cadherins may thus contribute to the sorting of heterogeneous cell types. Acts as a regulator of neural stem cells quiescence by mediating anchorage of neural stem cells to ependymocytes in the adult subependymal zone: upon cleavage by MMP24, CDH2-mediated anchorage is affected, leading to modulate neural stem cell quiescence. Plays a role in cell-to-cell junction formation between pancreatic beta cells and neural crest stem (NCS) cells, promoting the formation of processes by NCS cells. Required for proper neurite branching. Required for pre- and postsynaptic organization. CDH2 may be involved in neuronal recognition mechanism. In hippocampal neurons, may regulate dendritic spine density. The sequence is that of Cadherin-2 (Cdh2) from Mus musculus (Mouse).